Here is a 526-residue protein sequence, read N- to C-terminus: Na(+)/H(+) antiporter NhaB (526 aa).

11 consecutive transmembrane segments (helical) span residues 14–34 (FLGY…LVNP), 63–83 (CYPL…GMTS), 99–119 (MLLV…LFVF), 122–142 (LLLR…AAAF), 146–166 (FLDA…FYGI), 206–226 (LLMH…VGEP), 239–259 (FVSF…CGIL), 307–327 (AVIG…VGLI), 357–377 (FTAL…QQLF), 451–471 (ATPN…APLI), and 479–499 (VIMA…CVEF).

This sequence belongs to the NhaB Na(+)/H(+) (TC 2.A.34) antiporter family.

It localises to the cell inner membrane. The enzyme catalyses 2 Na(+)(in) + 3 H(+)(out) = 2 Na(+)(out) + 3 H(+)(in). Na(+)/H(+) antiporter that extrudes sodium in exchange for external protons. This chain is Na(+)/H(+) antiporter NhaB, found in Pectobacterium carotovorum subsp. carotovorum (strain PC1).